A 47-amino-acid polypeptide reads, in one-letter code: Protein YqgG (47 aa).

The protein is Protein YqgG of Escherichia coli (strain K12).